Consider the following 103-residue polypeptide: Putative septation protein SpoVG (103 aa).

It belongs to the SpoVG family.

In terms of biological role, could be involved in septation. This Exiguobacterium sibiricum (strain DSM 17290 / CCUG 55495 / CIP 109462 / JCM 13490 / 255-15) protein is Putative septation protein SpoVG.